A 252-amino-acid polypeptide reads, in one-letter code: 2-succinyl-6-hydroxy-2,4-cyclohexadiene-1-carboxylate synthase (252 aa).

This sequence belongs to the AB hydrolase superfamily. MenH family. As to quaternary structure, monomer.

It carries out the reaction 5-enolpyruvoyl-6-hydroxy-2-succinyl-cyclohex-3-ene-1-carboxylate = (1R,6R)-6-hydroxy-2-succinyl-cyclohexa-2,4-diene-1-carboxylate + pyruvate. Its pathway is quinol/quinone metabolism; 1,4-dihydroxy-2-naphthoate biosynthesis; 1,4-dihydroxy-2-naphthoate from chorismate: step 3/7. It functions in the pathway quinol/quinone metabolism; menaquinone biosynthesis. Its function is as follows. Catalyzes a proton abstraction reaction that results in 2,5-elimination of pyruvate from 2-succinyl-5-enolpyruvyl-6-hydroxy-3-cyclohexene-1-carboxylate (SEPHCHC) and the formation of 2-succinyl-6-hydroxy-2,4-cyclohexadiene-1-carboxylate (SHCHC). The protein is 2-succinyl-6-hydroxy-2,4-cyclohexadiene-1-carboxylate synthase of Escherichia coli (strain SE11).